The following is a 1742-amino-acid chain: NACHT and WD repeat domain-containing protein 2 (1742 aa).

LRR repeat units follow at residues 386–410, 677–698, 724–747, 883–906, and 925–953; these read FYEY…GHIN, LEDV…TRPS, VKNV…LYLQ, YSQE…VTAF, and LPKL…SSMD. One can recognise an NACHT domain in the interval 410–737; the sequence is NPLIIYGGPC…TLLVWANRHL (328 aa). 11 WD repeats span residues 963 to 1004, 1007 to 1046, 1140 to 1179, 1229 to 1271, 1272 to 1311, 1314 to 1353, 1355 to 1394, 1396 to 1434, 1476 to 1516, 1522 to 1564, and 1614 to 1653; these read LSSS…LLRQ, TAQS…LLSE, FSGG…SPQL, KHNE…ASLQ, EISG…AMSN, KTGK…IEAV, KHEG…NLFR, NGQR…RVCN, EDGT…ICRR, NFLK…VHAS, and SLYK…DAAL.

This chain is NACHT and WD repeat domain-containing protein 2 (NWD2), found in Homo sapiens (Human).